Here is a 2776-residue protein sequence, read N- to C-terminus: A-kinase anchor protein 13 (2776 aa).

11 disordered regions span residues 371 to 401 (KNKD…SCLQ), 452 to 518 (EPDA…TETT), 547 to 584 (PAEA…QSSP), 618 to 641 (TMPG…PAQS), 653 to 689 (EAGT…ESTM), 760 to 871 (VSQT…SPTA), 910 to 951 (ALGQ…IPGL), 995 to 1029 (GAAK…LPSG), 1431 to 1508 (LCDT…MDSI), 1527 to 1546 (PFRR…AEMN), and 1565 to 1603 (RRSF…FGGE). Residues 389 to 401 (DSGSASHQDSCLQ) show a composition bias toward polar residues. Residues 493–515 (QNNKPQVGEGTKERLENSDSSTT) form an important for interaction with PRKAR2A region. Positions 560–573 (PTEKPGMETQERGC) are enriched in basic and acidic residues. Polar residues predominate over residues 659-672 (AEATHQPSTVTSSG). Residues 773 to 788 (SPPASSFSLASSPESE) are compositionally biased toward low complexity. A Phosphoserine modification is found at S784. A Phosphothreonine modification is found at T809. Basic and acidic residues-rich tracts occupy residues 820–834 (DGPD…DKVG) and 914–940 (DGKD…EDQR). Residue T941 is modified to Phosphothreonine. Polar residues predominate over residues 1005 to 1020 (TSLSADSKQKASSTEQ). Residues 1433–1444 (DTTGSSSSTDDT) show a composition bias toward low complexity. The segment covering 1454–1476 (GSDVSLPQTSKLNRSRNHQSANG) has biased composition (polar residues). Phosphoserine is present on residues S1455, S1473, S1507, S1532, and S1569. The interval 1552 to 1678 (RALGHVVRRP…SRPFHSTSAN (127 aa)) is important for interaction with MAP2K3. The span at 1583 to 1594 (SSSLEMSSANSS) shows a compositional bias: low complexity. Residues S1608, S1611, and S1613 each carry the phosphoserine modification. K1637 carries the post-translational modification N6-methyllysine. The tract at residues 1711 to 1756 (TFSYIRNKMSSSKKSKEKEKEKDKIKEKEKDSKEKEKDKKTLNGHT) is disordered. Residues 1724–1751 (KSKEKEKEKDKIKEKEKDSKEKEKDKKT) show a composition bias toward basic and acidic residues. The segment at 1754-1801 (GHTFSPIPIVGPISCSQCMKPFTNKDAYTCAGCGAFVHKGCRENLASC) adopts a Phorbol-ester/DAG-type zinc-finger fold. A phosphoserine mark is found at S1839, S1858, and S1892. Residues 1882–2776 (MSNTWKFLSH…VPAEGEEIFC (895 aa)) form an interaction with ESR1 region. Phosphothreonine is present on T1893. Phosphoserine occurs at positions 1895 and 1908. A DH domain is found at 1957–2154 (KRQEVIYELM…KDVIGAVDSK (198 aa)). The region spanning 2194–2296 (KLVRDGSVFL…WIQIIQDTIN (103 aa)) is the PH domain. Residues S2308 and S2361 each carry the phosphoserine modification. Positions 2308–2345 (SENEEEKKLLDTKARELKEQLQQKDQQILLLLEEKEMI) form a coiled coil. The residue at position 2431 (T2431) is a Phosphothreonine. Residues 2436-2471 (DCHQMNASKGGEKEEGDDGQDLRRTESDSGLKKGGN) form a disordered region. Over residues 2455-2466 (QDLRRTESDSGL) the composition is skewed to basic and acidic residues. Phosphoserine occurs at positions 2527 and 2530. A coiled-coil region spans residues 2532–2646 (LIEQEKQRSL…ERLSQRQMDQ (115 aa)). Disordered stretches follow at residues 2549-2605 (ANLQ…EELQ) and 2626-2776 (EREQ…EIFC). 2 stretches are compositionally biased toward basic and acidic residues: residues 2558–2605 (HLEE…EELQ) and 2626–2640 (EREQ…ERLS). Composition is skewed to polar residues over residues 2641-2653 (QRQM…QVSN), 2665-2700 (LPNS…SISR), and 2713-2727 (SASQ…SQAP). 2 positions are modified to phosphoserine: S2673 and S2692.

In terms of assembly, interacts with the cAMP-dependent protein kinase (PKA) holoenzyme and with the regulatory subunit PRKAR2A. Interacts with RHOA. Also interacts with RHOB and RHOC. Identified in a ternary complex with RHOA and PRKAR2A. Identified in a complex with NR3C1 and RHOA. Interacts with BRAF and KSR1. Identified in a complex with BRAF and KSR1. Component of a signaling complex containing at least AKAP13, PKN1, MAPK14, ZAK and MAP2K3. Within this complex, AKAP13 interacts directly with PKN1, which in turn recruits MAPK14, MAP2K3 and ZAK. Interacts (phosphorylated form) with YWHAB and YWHAZ. Interaction with YWHAB inhibits activation of RHOA, interferes with PKN1 binding and activation of MAP kinases. Interacts with GNA12. Interacts with IKBKB. Interacts with ESR1, THRA, PPARA and NME2. Interacts (via the C-terminal domain after the PH domain) with MEF2C and RXRB. Interacts (via the C-terminal domain after the PH domain) with PRKD1. As to expression, detected in embryonic heart, limb bud, first branchial arch and forebrain (at protein level). Detected in heart. Detected in perichondrium, but not in the bone growth plate.

It localises to the cytoplasm. The protein resides in the cytosol. It is found in the cell cortex. Its subcellular location is the cytoskeleton. The protein localises to the nucleus. It localises to the membrane. Functionally, scaffold protein that plays an important role in assembling signaling complexes downstream of several types of G protein-coupled receptors. Activates RHOA in response to signaling via G protein-coupled receptors via its function as Rho guanine nucleotide exchange factor. May also activate other Rho family members. Part of a kinase signaling complex that links ADRA1A and ADRA1B adrenergic receptor signaling to the activation of downstream p38 MAP kinases, such as MAPK11 and MAPK14. Part of a signaling complex that links ADRA1B signaling to the activation of RHOA and IKBKB/IKKB, leading to increased NF-kappa-B transcriptional activity. Part of a RHOA-dependent signaling cascade that mediates responses to lysophosphatidic acid (LPA), a signaling molecule that activates G-protein coupled receptors and potentiates transcriptional activation of the glucocorticoid receptor NR3C1. Part of a signaling cascade that stimulates MEF2C-dependent gene expression in response to lysophosphatidic acid (LPA). Part of a signaling pathway that activates MAPK11 and/or MAPK14 and leads to increased transcription activation of the estrogen receptors ESR1 and ESR2. Part of a signaling cascade that links cAMP and EGFR signaling to BRAF signaling and to PKA-mediated phosphorylation of KSR1, leading to the activation of downstream MAP kinases, such as MAPK1 or MAPK3. Functions as a scaffold protein that anchors cAMP-dependent protein kinase (PKA) and PRKD1. This promotes activation of PRKD1, leading to increased phosphorylation of HDAC5 and ultimately cardiomyocyte hypertrophy. Has no guanine nucleotide exchange activity on CDC42, Ras or Rac. Required for normal embryonic heart development, and in particular for normal sarcomere formation in the developing cardiomyocytes. Plays a role in cardiomyocyte growth and cardiac hypertrophy in response to activation of the beta-adrenergic receptor by phenylephrine or isoproterenol. Required for normal adaptive cardiac hypertrophy in response to pressure overload. Plays a role in osteogenesis. The protein is A-kinase anchor protein 13 of Mus musculus (Mouse).